A 211-amino-acid chain; its full sequence is Thymidylate kinase (211 aa).

10–17 (GPDGAGKT) contributes to the ATP binding site.

Belongs to the thymidylate kinase family.

It catalyses the reaction dTMP + ATP = dTDP + ADP. Phosphorylation of dTMP to form dTDP in both de novo and salvage pathways of dTTP synthesis. The sequence is that of Thymidylate kinase (tmk) from Lactococcus lactis subsp. lactis (strain IL1403) (Streptococcus lactis).